The primary structure comprises 434 residues: 3-phosphoshikimate 1-carboxyvinyltransferase (434 aa).

3-phosphoshikimate-binding residues include Lys22, Ser23, and Arg27. Lys22 provides a ligand contact to phosphoenolpyruvate. Phosphoenolpyruvate-binding residues include Gly93 and Arg121. 3-phosphoshikimate-binding residues include Ser168, Ser169, Gln170, Ser199, Asp320, and Lys347. Gln170 is a binding site for phosphoenolpyruvate. The active-site Proton acceptor is Asp320. Arg351, Arg394, and Lys419 together coordinate phosphoenolpyruvate.

Belongs to the EPSP synthase family. Monomer.

It is found in the cytoplasm. The enzyme catalyses 3-phosphoshikimate + phosphoenolpyruvate = 5-O-(1-carboxyvinyl)-3-phosphoshikimate + phosphate. The protein operates within metabolic intermediate biosynthesis; chorismate biosynthesis; chorismate from D-erythrose 4-phosphate and phosphoenolpyruvate: step 6/7. Catalyzes the transfer of the enolpyruvyl moiety of phosphoenolpyruvate (PEP) to the 5-hydroxyl of shikimate-3-phosphate (S3P) to produce enolpyruvyl shikimate-3-phosphate and inorganic phosphate. In Burkholderia orbicola (strain AU 1054), this protein is 3-phosphoshikimate 1-carboxyvinyltransferase.